Reading from the N-terminus, the 186-residue chain is MARKKKTRRITDIMPIRKADKKIDITKARSGKKLTCYELDAKAREDKKKRKHKGLASGSRHSAVEEKANKLQNEIKDPKIGSKKKIPLVVEFVNKPEKGQVIPVIKQVKKQDPMKELENLENNEILNELLDALDAGKTISKSDQQFVDECLDRISELMEELGIEDEDESEDDLYRTFERMDINQFR.

The interval 42 to 77 (KAREDKKKRKHKGLASGSRHSAVEEKANKLQNEIKD) is disordered. A compositionally biased stretch (basic and acidic residues) spans 62-77 (SAVEEKANKLQNEIKD).

Belongs to the YihI family. In terms of assembly, interacts with Der.

Its function is as follows. A GTPase-activating protein (GAP) that modifies Der/EngA GTPase function. May play a role in ribosome biogenesis. This is Der GTPase-activating protein YihI from Haemophilus influenzae (strain ATCC 51907 / DSM 11121 / KW20 / Rd).